The chain runs to 926 residues: DNA mismatch repair protein MutS (926 aa).

A disordered region spans residues 1–67 (MAASPNPLQG…NPNQINDLDQ (67 aa)). Composition is skewed to polar residues over residues 18 to 44 (QSTTNGGKETNNSIGSSENLSNQQLKS) and 57 to 67 (KNPNQINDLDQ). Residue 726–733 (GPNASGKS) coordinates ATP.

Belongs to the DNA mismatch repair MutS family.

Its function is as follows. This protein is involved in the repair of mismatches in DNA. It is possible that it carries out the mismatch recognition step. This protein has a weak ATPase activity. This Prochlorococcus marinus (strain NATL1A) protein is DNA mismatch repair protein MutS.